The following is a 519-amino-acid chain: Probable WRKY transcription factor 33 (519 aa).

Disordered stretches follow at residues 1 to 34 (MAASFLTMDNSRTRQNMNGSANWSQQSGRTSTSS) and 123 to 212 (SSGV…CTFP). A compositionally biased stretch (polar residues) spans 7-34 (TMDNSRTRQNMNGSANWSQQSGRTSTSS). Residues 130–142 (TTTTTTTTTTTTT) are compositionally biased toward low complexity. The segment covering 164 to 174 (TETRPNNQAVS) has biased composition (polar residues). Over residues 178 to 188 (REQRKGEDGYN) the composition is skewed to basic and acidic residues. Residues 178 to 242 (REQRKGEDGY…YKGSHNHPKP (65 aa)) constitute a DNA-binding region (WRKY 1). Positions 209, 214, 237, and 239 each coordinate Zn(2+). Disordered regions lie at residues 232 to 255 (VYKGSHNHPKPQSTRRSSSSSSTF) and 267 to 349 (NRQA…REPR). The span at 245-254 (TRRSSSSSST) shows a compositional bias: low complexity. Residues 269 to 299 (QASSDQPNSNNSFHQSDSFGMQQEDNTTSDS) show a composition bias toward polar residues. Residues 323–332 (PEAKRWKGDN) show a composition bias toward basic and acidic residues. The segment at residues 356–421 (SDIDILDDGY…YEGKHNHDVP (66 aa)) is a DNA-binding region (WRKY 2). The Zn(2+) site is built by Cys-387, Cys-392, His-416, and His-418.

Belongs to the WRKY group I family. Interacts with MKS1. Interacts with ATG18A. Interacts with SIB1 and SIB2. Interacts with VQ1 and VQ10. Phosphorylated by MPK4. Phosphorylated on serine residues by MPK3 and MPK6 following infection with the necrotrophic fungal pathogen B.cinerea. As to expression, highly expressed in roots, leaves and flowers, and at lower levels in stems, siliques and seeds.

It is found in the nucleus. In terms of biological role, transcription factor. Interacts specifically with the W box (5'-TTGAC[CT]-3'), a frequently occurring elicitor-responsive cis-acting element. Involved in defense responses. Required for resistance to the necrotrophic fungal pathogen B.cinerea. Regulates the antagonistic relationship between defense pathways mediating responses to the bacterial pathogen P. syringae and the necrotrophic pathogen B.cinerea. Required for the phytoalexin camalexin synthesis following infection with B.cinerea. Acts as a positive regulator of the camalexin biosynthetic genes PAD3 (CYP71B15) and CYP71A13 by binding to their promoters. Acts downstream of MPK3 and MPK6 in reprogramming the expression of camalexin biosynthetic genes, which drives the metabolic flow to camalexin production. Functions with WRKY25 as positive regulator of salt stress response and abscisic acid (ABA) signaling. Functions with WRKY25 and WRKY26 as positive regulator of plant thermotolerance by partially participating in ethylene-response signal transduction pathway. The DNA-binding activity of WRKY33 is increased by SIB1 and SIB2. This is Probable WRKY transcription factor 33 (WRKY33) from Arabidopsis thaliana (Mouse-ear cress).